The following is a 715-amino-acid chain: MNVIAILNHMGVYFKEEPIRELHRALERLNFQIVYPNDRDDLLKLIENNARLCGVIFDWDKYNLELCEEISKMNENLPLYAFANTYSTLDVSLNDLRLQISFFEYALGAAEDIANKIKQTTDEYINTILPPLTKALFKYVREGKYTFCTPGHMGGTAFQKSPVGSLFYDFFGPNTMKSDISISVSELGSLLDHSGPHKEAEQYIARVFNADRSYMVTNGTSTANKIVGMYSAPAGSTILIDRNCHKSLTHLMMMSDVTPIYFRPTRNAYGILGGIPQSEFQHATIAKRVKETPNATWPVHAVITNSTYDGLLYNTDFIKKTLDVKSIHFDSAWVPYTNFSPIYEGKCGMSGGRVEGKVIYETQSTHKLLAAFSQASMIHVKGDVNEETFNEAYMMHTTTSPHYGIVASTETAAAMMKGNAGKRLINGSIERAIKFRKEIKRLRTESDGWFFDVWQPDHIDTTECWPLRSDSTWHGFKNIDNEHMYLDPIKVTLLTPGMEKDGTMSDFGIPASIVAKYLDEHGIVVEKTGPYNLLFLFSIGIDKTKALSLLRALTDFKRAFDLNLRVKNMLPSLYREDPEFYENMRIQELAQNIHKLIVHHNLPDLMYRAFEVLPTMVMTPYAAFQKELHGMTEEVYLDEMVGRINANMILPYPPGVPLVMPGEMITEESRPVLEFLQMLCEIGAHYPGFETDIHGAYRQADGRYTVKVLKEESKK.

Position 367 is an N6-(pyridoxal phosphate)lysine (Lys-367).

Belongs to the Orn/Lys/Arg decarboxylase class-I family. In terms of assembly, homodecamer. Interacts with RavA. Pyridoxal 5'-phosphate serves as cofactor.

Its subcellular location is the cytoplasm. The enzyme catalyses L-lysine + H(+) = cadaverine + CO2. This chain is Inducible lysine decarboxylase (cadA), found in Escherichia coli O157:H7.